We begin with the raw amino-acid sequence, 626 residues long: Myelin-associated glycoprotein (626 aa).

The first 19 residues, 1-19 (MIFLTALPLFWIMISASRG), serve as a signal peptide directing secretion. Residues 20 to 325 (GHWGAWMPSS…RTVGLSVMYA (306 aa)) are interaction with RTN4R and RTN4RL2. Residues 20-516 (GHWGAWMPSS…HRLMWAKIGP (497 aa)) lie on the Extracellular side of the membrane. The region spanning 22 to 120 (WGAWMPSSIS…LGGKYYFRGD (99 aa)) is the Ig-like V-type domain. 3 cysteine pairs are disulfide-bonded: C37–C165, C42–C100, and C159–C217. 65 to 67 (YPK) contributes to the a ganglioside GT1b (d18:1(4E)) binding site. An N-linked (GlcNAc...) asparagine glycan is attached at N99. An N-linked (GlcNAc...) asparagine; partial glycan is attached at N106. A ganglioside GT1b (d18:1(4E))-binding positions include R118 and 124 to 128 (YNQYT). Ig-like C2-type domains follow at residues 139–237 (NTPN…MDVK), 241–325 (VIVE…VMYA), 327–412 (WKPT…VEFA), and 413–508 (PVLL…GAHR). N-linked (GlcNAc...) asparagine glycosylation is found at N223 and N246. C261 and C305 are disulfide-bonded. N315 carries an N-linked (GlcNAc...) asparagine glycan. C347 and C392 are disulfide-bonded. N406 carries N-linked (GlcNAc...) asparagine glycosylation. 2 cysteine pairs are disulfide-bonded: C421/C430 and C432/C488. N450 and N454 each carry an N-linked (GlcNAc...) asparagine glycan. The chain crosses the membrane as a helical span at residues 517 to 536 (VGAVVAFAILIAIVCYITQT). C531 is lipidated: S-palmitoyl cysteine. At 537-626 (RRKKNVTESP…LAEYAEIRVK (90 aa)) the chain is on the cytoplasmic side. Phosphoserine is present on residues S545, S547, and S549. The required for normal axon myelination in the central nervous system stretch occupies residues 577-626 (LGSERRLLGLRGEPPELDLSYSHSDLGKRPTKDSYTLTEELAEYAEIRVK). The disordered stretch occupies residues 582 to 608 (RLLGLRGEPPELDLSYSHSDLGKRPTK).

It belongs to the immunoglobulin superfamily. SIGLEC (sialic acid binding Ig-like lectin) family. Monomer and homodimer. Interacts (via the first three N-terminal Ig-like domains) with RTN4R and RTN4RL2. Interacts with RTN4R. Interacts with isoform 2 of BSG. Post-translationally, N-glycosylated. In terms of processing, phosphorylated on tyrosine residues. Ubiquitinated, leading to proteasomal degradation. Both isoform 1 and isoform 2 are detected in myelinated structures in the central and peripheral nervous system, in periaxonal myelin and at Schmidt-Lanterman incisures. Detected in optic nerve, in oligodendroglia and in periaxonal myelin sheaths. Detected in compact myelin (at protein level). Both isoform 1 and isoform 2 are detected in the central and peripheral nervous system.

It is found in the cell membrane. Its subcellular location is the membrane raft. Its function is as follows. Adhesion molecule that mediates interactions between myelinating cells and neurons by binding to neuronal sialic acid-containing gangliosides and to the glycoproteins RTN4R and RTN4RL2. Not required for initial myelination, but seems to play a role in the maintenance of normal axon myelination. Protects motoneurons against apoptosis, also after injury; protection against apoptosis is probably mediated via interaction with neuronal RTN4R and RTN4RL2. Required to prevent degeneration of myelinated axons in adults; this probably depends on binding to gangliosides on the axon cell membrane. Negative regulator of neurite outgrowth; in dorsal root ganglion neurons the inhibition is mediated primarily via binding to neuronal RTN4R or RTN4RL2 and to a lesser degree via binding to neuronal gangliosides. In cerebellar granule cells the inhibition is mediated primarily via binding to neuronal gangliosides. In sensory neurons, inhibition of neurite extension depends only partially on RTN4R, RTN4RL2 and gangliosides. Inhibits axon longitudinal growth. Inhibits axon outgrowth by binding to RTN4R. Preferentially binds to alpha-2,3-linked sialic acid. Binds ganglioside Gt1b. The protein is Myelin-associated glycoprotein (MAG) of Homo sapiens (Human).